We begin with the raw amino-acid sequence, 106 residues long: UPF0145 protein Pput_2816 (106 aa).

It belongs to the UPF0145 family.

In Pseudomonas putida (strain ATCC 700007 / DSM 6899 / JCM 31910 / BCRC 17059 / LMG 24140 / F1), this protein is UPF0145 protein Pput_2816.